The primary structure comprises 386 residues: bHLH transcription factor RHL1 (386 aa).

Positions 119–186 (FTGSLNGTQP…RRGQATDPHS (68 aa)) are disordered. Over residues 127–137 (QPQQHFQHPPQ) the composition is skewed to low complexity. Positions 138–151 (GNSNQIQGQNFGAT) are enriched in polar residues. A basic motif; degenerate region spans residues 180–193 (QATDPHSIAERLRR). A bHLH domain is found at 180–229 (QATDPHSIAERLRRERIAERMKALQELVPNANKTDKASMLDEIIDYVKFL). A helix-loop-helix motif region spans residues 194 to 229 (ERIAERMKALQELVPNANKTDKASMLDEIIDYVKFL).

Expressed in root epidermal cells.

The protein localises to the nucleus. In terms of biological role, transcription factor that regulates the development of root hairs. The chain is bHLH transcription factor RHL1 from Lotus japonicus (Lotus corniculatus var. japonicus).